The following is a 391-amino-acid chain: Elongation factor Tu 2 (391 aa).

The region spanning 10–201 (KPHVNIGTIG…EVDRYIPTPE (192 aa)) is the tr-type G domain. The segment at 19–26 (GHVDHGKT) is G1. 19–26 (GHVDHGKT) contacts GTP. Thr-26 contributes to the Mg(2+) binding site. The interval 55–59 (GITIS) is G2. The segment at 76–79 (DCPG) is G3. Residues 76-80 (DCPGH) and 131-134 (NKVD) contribute to the GTP site. The G4 stretch occupies residues 131–134 (NKVD). Residues 169 to 171 (SAL) form a G5 region.

It belongs to the TRAFAC class translation factor GTPase superfamily. Classic translation factor GTPase family. EF-Tu/EF-1A subfamily. Monomer.

It localises to the cytoplasm. The catalysed reaction is GTP + H2O = GDP + phosphate + H(+). Functionally, GTP hydrolase that promotes the GTP-dependent binding of aminoacyl-tRNA to the A-site of ribosomes during protein biosynthesis. The protein is Elongation factor Tu 2 of Bartonella bacilliformis (strain ATCC 35685 / KC583 / Herrer 020/F12,63).